The primary structure comprises 193 residues: Dual-action ribosomal maturation protein DarP (193 aa).

Residues 1-10 (MRGRDEETGE) show a composition bias toward basic and acidic residues. Disordered stretches follow at residues 1-20 (MRGR…SQQR) and 171-193 (QEQG…EDDE). The span at 178-193 (GDSELEDGESASEDDE) shows a compositional bias: acidic residues.

It belongs to the DarP family.

The protein localises to the cytoplasm. Its function is as follows. Member of a network of 50S ribosomal subunit biogenesis factors which assembles along the 30S-50S interface, preventing incorrect 23S rRNA structures from forming. Promotes peptidyl transferase center (PTC) maturation. The protein is Dual-action ribosomal maturation protein DarP of Xanthomonas axonopodis pv. citri (strain 306).